A 266-amino-acid chain; its full sequence is Zinc transporter ZupT (266 aa).

8 consecutive transmembrane segments (helical) span residues Leu8–Val28, Leu36–Ile56, Ala71–Asp91, Gly123–Phe143, Gly152–Val172, Phe185–Leu205, Phe209–Ile229, and Leu246–Thr266. The Fe(2+) site is built by Asn134 and Glu137. Zn(2+) is bound by residues Glu137 and His162. Residues Asn163, Glu166, and Glu195 each contribute to the Fe(2+) site. Glu166 serves as a coordination point for Zn(2+).

This sequence belongs to the ZIP transporter (TC 2.A.5) family. ZupT subfamily.

It is found in the cell inner membrane. It catalyses the reaction Zn(2+)(in) = Zn(2+)(out). Functionally, mediates zinc uptake. May also transport other divalent cations. This chain is Zinc transporter ZupT, found in Chlorobium luteolum (strain DSM 273 / BCRC 81028 / 2530) (Pelodictyon luteolum).